A 36-amino-acid chain; its full sequence is Photosystem II reaction center protein X (36 aa).

The helical transmembrane segment at 9–29 (LWSIFWGGVVVALGAAALTAI) threads the bilayer.

Belongs to the PsbX family. Type 1 subfamily. PSII is composed of 1 copy each of membrane proteins PsbA, PsbB, PsbC, PsbD, PsbE, PsbF, PsbH, PsbI, PsbJ, PsbK, PsbL, PsbM, PsbT, PsbX, Psb30/Ycf12, peripheral proteins PsbO, CyanoQ (PsbQ), PsbU, PsbV and a large number of cofactors. It forms dimeric complexes.

The protein resides in the cell inner membrane. Functionally, involved in the binding and/or turnover of quinones at the Q(B) site of photosystem II (PSII). PSII is a light-driven water plastoquinone oxidoreductase, using light energy to abstract electrons from H(2)O, generating a proton gradient subsequently used for ATP formation. The chain is Photosystem II reaction center protein X from Gloeobacter violaceus (strain ATCC 29082 / PCC 7421).